Consider the following 105-residue polypeptide: Heat shock protein HspQ (105 aa).

The protein belongs to the HspQ family.

Its subcellular location is the cytoplasm. Functionally, involved in the degradation of certain denaturated proteins, including DnaA, during heat shock stress. The polypeptide is Heat shock protein HspQ (Blochmanniella floridana).